Reading from the N-terminus, the 356-residue chain is Dynein regulatory complex protein 10 (356 aa).

The stretch at 126–167 (SNREFFEEVRDREERAVAEQEQLKQKLKLQRVELQKAAGTIQ) forms a coiled coil. The interval 173 to 209 (ARGEVSEVQSSTQQSRAAIEGSARAQSEADKSSFQSD) is disordered. A compositionally biased stretch (low complexity) spans 178-187 (SEVQSSTQQS). A coiled-coil region spans residues 197–287 (AQSEADKSSF…LRQLQEYNSG (91 aa)). The IQ domain maps to 319–348 (QNHAARVIQSYWRGFKKAREAAKKKAKKLE).

This sequence belongs to the DRC10 family. As to quaternary structure, component of the nexin-dynein regulatory complex (N-DRC).

It localises to the cytoplasm. The protein resides in the cytoskeleton. The protein localises to the flagellum axoneme. Component of the nexin-dynein regulatory complex (N-DRC), a key regulator of ciliary/flagellar motility which maintains the alignment and integrity of the distal axoneme and regulates microtubule sliding in motile axonemes. This chain is Dynein regulatory complex protein 10, found in Chlamydomonas reinhardtii (Chlamydomonas smithii).